Reading from the N-terminus, the 238-residue chain is Orotidine 5'-phosphate decarboxylase (238 aa).

Substrate is bound by residues Asp-10, Lys-32, Asp-59 to Thr-68, Thr-122, Arg-184, Gln-193, Gly-213, and Arg-214. Lys-61 acts as the Proton donor in catalysis.

This sequence belongs to the OMP decarboxylase family. Type 1 subfamily. As to quaternary structure, homodimer.

The catalysed reaction is orotidine 5'-phosphate + H(+) = UMP + CO2. The protein operates within pyrimidine metabolism; UMP biosynthesis via de novo pathway; UMP from orotate: step 2/2. Its function is as follows. Catalyzes the decarboxylation of orotidine 5'-monophosphate (OMP) to uridine 5'-monophosphate (UMP). In Bacillus cereus (strain Q1), this protein is Orotidine 5'-phosphate decarboxylase.